Consider the following 391-residue polypeptide: Nutrient and stress factor 1 (391 aa).

Polar residues predominate over residues 1-27 (MENTTNRNTAGVLTSSNGNFATNSVAA). A disordered region spans residues 1–37 (MENTTNRNTAGVLTSSNGNFATNSVAASTPKRSKSAR). 2 C2H2-type zinc fingers span residues 41–66 (FKCTGYDGCTMSFTRAEHLARHIRKH) and 72–95 (FQCPACLKFFSRVDNLKQHRESVH). The disordered stretch occupies residues 91–149 (RESVHAHKNHHSTSSHQRKPSSSSLSSSSSASSSSSASSSTSYSDPYRKTNINSGNMPM). Residues 96 to 109 (AHKNHHSTSSHQRK) show a composition bias toward basic residues. Residues 110 to 134 (PSSSSLSSSSSASSSSSASSSTSYS) show a composition bias toward low complexity. A phosphoserine mark is found at Ser162 and Ser163. The tract at residues 326-374 (AFSQPPNGNKNNNMSSSKNGGKGGENFKNTDDRNDNNNKKRSETLSESD) is disordered. Low complexity predominate over residues 332 to 344 (NGNKNNNMSSSKN). Positions 353–369 (KNTDDRNDNNNKKRSET) are enriched in basic and acidic residues.

Its subcellular location is the nucleus. Transcription factor that participates in the transcriptional activation of glucose-repressed genes during exponential growth in non-fermentable carbon conditions. Also involved in salt-stress response. The chain is Nutrient and stress factor 1 (USV1) from Saccharomyces cerevisiae (strain ATCC 204508 / S288c) (Baker's yeast).